The chain runs to 153 residues: Ergochrome gene cluster protein CPUR_05425 (153 aa).

It functions in the pathway pigment biosynthesis. Part of the ergochrome gene cluster responsible for the typical purple-black color of the ergot sclerotia. The ergochrome gene cluster produces several ergot pigments including the yellow ergochrome secalonic acid and its derivatives, as well as the red anthraquinones endocrocin and clavorubin. The pathway begins with the synthesis of atrochrysone thioester by the polyketide synthase (PKS) CPUR_05437. The atrochrysone carboxyl ACP thioesterase CPUR_05436 then breaks the thioester bond and releases the atrochrysone carboxylic acid from CPUR_05437. The atrochrysone carboxylic acid is then converted to atrochrysone which is further transformed into emodin anthrone. The next step is performed by the anthrone oxygenase CPUR_05434 that catalyzes the oxidation of emodinanthrone to emodin. Emodin is further modified to yield monodictyphenone via several steps involving CPUR_05427, CPUR_05428, CPUR_05429 and CPUR_05430. The short chain dehydrogenase/reductase CPUR_05418 then catalyzes the C-5 ketoreduction to give the xanthone skeleton of the monomeric units. Ergochromes formation requires further dimerization steps of different xanthone units, probably catalyzed by the cytochrome P450 monooxygenase CPUR_05419. CPUR_05425, CPUR_05426 and CPUR_05431 are unique to Claviceps, thus it is likely that they are involved in further modification of xanthone units or in their dimerization. The yellow ergochromes and the red anthraquinone pigments endocrocin and clavorubin are products from the same PKS derived precursors and the latter are likely shunt products in the pathway of xanthone biosynthesis. It is proposed that atrochrysone carboxylic acid released from the PKS CPUR_05437 can also be converted to endocrocin anthrone which is further oxidized into endocrocin by CPUR_05435. Endocrocin could be then modified to clavorubin, possibly by CPUR_05423 and CPUR_05431. Clavorubin is the principal anthraquinone metabolite produced by the cluster with a much higher yield compared to endocrocin. This chain is Ergochrome gene cluster protein CPUR_05425, found in Claviceps purpurea (strain 20.1) (Ergot fungus).